A 469-amino-acid chain; its full sequence is UDP-N-acetylmuramate--L-alanine ligase (469 aa).

Glycine 112–threonine 118 provides a ligand contact to ATP.

It belongs to the MurCDEF family.

The protein localises to the cytoplasm. The enzyme catalyses UDP-N-acetyl-alpha-D-muramate + L-alanine + ATP = UDP-N-acetyl-alpha-D-muramoyl-L-alanine + ADP + phosphate + H(+). The protein operates within cell wall biogenesis; peptidoglycan biosynthesis. Cell wall formation. This chain is UDP-N-acetylmuramate--L-alanine ligase, found in Leptothrix cholodnii (strain ATCC 51168 / LMG 8142 / SP-6) (Leptothrix discophora (strain SP-6)).